Consider the following 513-residue polypeptide: L-threonine dehydratase biosynthetic IlvA (513 aa).

Position 61 is an N6-(pyridoxal phosphate)lysine (Lys61). Residues Asn88, 187-191, and Ser314 contribute to the pyridoxal 5'-phosphate site; that span reads GGGGL. 2 consecutive ACT-like domains span residues 338–409 and 432–504; these read ALLA…DLSN and RLYS…DVTE.

The protein belongs to the serine/threonine dehydratase family. Homotetramer. The cofactor is pyridoxal 5'-phosphate.

It catalyses the reaction L-threonine = 2-oxobutanoate + NH4(+). It participates in amino-acid biosynthesis; L-isoleucine biosynthesis; 2-oxobutanoate from L-threonine: step 1/1. In terms of biological role, catalyzes the anaerobic formation of alpha-ketobutyrate and ammonia from threonine in a two-step reaction. The first step involved a dehydration of threonine and a production of enamine intermediates (aminocrotonate), which tautomerizes to its imine form (iminobutyrate). Both intermediates are unstable and short-lived. The second step is the nonenzymatic hydrolysis of the enamine/imine intermediates to form 2-ketobutyrate and free ammonia. In the low water environment of the cell, the second step is accelerated by RidA. This chain is L-threonine dehydratase biosynthetic IlvA (ilvA), found in Pasteurella multocida (strain Pm70).